The chain runs to 556 residues: 2-succinyl-5-enolpyruvyl-6-hydroxy-3-cyclohexene-1-carboxylate synthase (556 aa).

The protein belongs to the TPP enzyme family. MenD subfamily. In terms of assembly, homodimer. Requires Mg(2+) as cofactor. It depends on Mn(2+) as a cofactor. Thiamine diphosphate serves as cofactor.

It carries out the reaction isochorismate + 2-oxoglutarate + H(+) = 5-enolpyruvoyl-6-hydroxy-2-succinyl-cyclohex-3-ene-1-carboxylate + CO2. It functions in the pathway quinol/quinone metabolism; 1,4-dihydroxy-2-naphthoate biosynthesis; 1,4-dihydroxy-2-naphthoate from chorismate: step 2/7. Its pathway is quinol/quinone metabolism; menaquinone biosynthesis. Its function is as follows. Catalyzes the thiamine diphosphate-dependent decarboxylation of 2-oxoglutarate and the subsequent addition of the resulting succinic semialdehyde-thiamine pyrophosphate anion to isochorismate to yield 2-succinyl-5-enolpyruvyl-6-hydroxy-3-cyclohexene-1-carboxylate (SEPHCHC). The polypeptide is 2-succinyl-5-enolpyruvyl-6-hydroxy-3-cyclohexene-1-carboxylate synthase (Saccharopolyspora erythraea (strain ATCC 11635 / DSM 40517 / JCM 4748 / NBRC 13426 / NCIMB 8594 / NRRL 2338)).